The following is a 1162-amino-acid chain: DNA-directed RNA polymerase subunit beta (1162 aa).

It belongs to the RNA polymerase beta chain family. In terms of assembly, the RNAP catalytic core consists of 2 alpha, 1 beta, 1 beta' and 1 omega subunit. When a sigma factor is associated with the core the holoenzyme is formed, which can initiate transcription.

The enzyme catalyses RNA(n) + a ribonucleoside 5'-triphosphate = RNA(n+1) + diphosphate. DNA-dependent RNA polymerase catalyzes the transcription of DNA into RNA using the four ribonucleoside triphosphates as substrates. In Clavibacter michiganensis subsp. michiganensis (strain NCPPB 382), this protein is DNA-directed RNA polymerase subunit beta.